A 246-amino-acid polypeptide reads, in one-letter code: Probable phosphatase ASA_1316 (246 aa).

Residues His-8, His-10, His-16, His-41, Glu-74, His-102, His-132, Asp-193, and His-195 each contribute to the Zn(2+) site.

It belongs to the PHP family. Requires Zn(2+) as cofactor.

The sequence is that of Probable phosphatase ASA_1316 from Aeromonas salmonicida (strain A449).